The following is a 236-amino-acid chain: Leucyl/phenylalanyl-tRNA--protein transferase (236 aa).

Belongs to the L/F-transferase family.

Its subcellular location is the cytoplasm. It catalyses the reaction N-terminal L-lysyl-[protein] + L-leucyl-tRNA(Leu) = N-terminal L-leucyl-L-lysyl-[protein] + tRNA(Leu) + H(+). It carries out the reaction N-terminal L-arginyl-[protein] + L-leucyl-tRNA(Leu) = N-terminal L-leucyl-L-arginyl-[protein] + tRNA(Leu) + H(+). The catalysed reaction is L-phenylalanyl-tRNA(Phe) + an N-terminal L-alpha-aminoacyl-[protein] = an N-terminal L-phenylalanyl-L-alpha-aminoacyl-[protein] + tRNA(Phe). Its function is as follows. Functions in the N-end rule pathway of protein degradation where it conjugates Leu, Phe and, less efficiently, Met from aminoacyl-tRNAs to the N-termini of proteins containing an N-terminal arginine or lysine. The sequence is that of Leucyl/phenylalanyl-tRNA--protein transferase from Shewanella sp. (strain MR-4).